The chain runs to 156 residues: Ribosome maturation factor RimP (156 aa).

This sequence belongs to the RimP family.

It is found in the cytoplasm. Required for maturation of 30S ribosomal subunits. The chain is Ribosome maturation factor RimP from Bacillus mycoides (strain KBAB4) (Bacillus weihenstephanensis).